The sequence spans 521 residues: Phosphoenolpyruvate carboxykinase (ATP) (521 aa).

Substrate-binding residues include arginine 52, tyrosine 186, and lysine 192. Residues lysine 192, histidine 211, and 227–235 (GLSGTGKTT) contribute to the ATP site. 2 residues coordinate Mn(2+): lysine 192 and histidine 211. Aspartate 248 contacts Mn(2+). ATP-binding positions include glutamate 276, arginine 313, 432-433 (RI), and threonine 438. Position 313 (arginine 313) interacts with substrate.

It belongs to the phosphoenolpyruvate carboxykinase (ATP) family. It depends on Mn(2+) as a cofactor.

The protein localises to the cytoplasm. It catalyses the reaction oxaloacetate + ATP = phosphoenolpyruvate + ADP + CO2. The protein operates within carbohydrate biosynthesis; gluconeogenesis. Its function is as follows. Involved in the gluconeogenesis. Catalyzes the conversion of oxaloacetate (OAA) to phosphoenolpyruvate (PEP) through direct phosphoryl transfer between the nucleoside triphosphate and OAA. The polypeptide is Phosphoenolpyruvate carboxykinase (ATP) (Caldanaerobacter subterraneus subsp. tengcongensis (strain DSM 15242 / JCM 11007 / NBRC 100824 / MB4) (Thermoanaerobacter tengcongensis)).